Reading from the N-terminus, the 190-residue chain is Crossover junction endodeoxyribonuclease RuvC (190 aa).

Catalysis depends on residues Asp8, Glu67, and Asp139. Residues Asp8, Glu67, and Asp139 each contribute to the Mg(2+) site.

This sequence belongs to the RuvC family. As to quaternary structure, homodimer which binds Holliday junction (HJ) DNA. The HJ becomes 2-fold symmetrical on binding to RuvC with unstacked arms; it has a different conformation from HJ DNA in complex with RuvA. In the full resolvosome a probable DNA-RuvA(4)-RuvB(12)-RuvC(2) complex forms which resolves the HJ. It depends on Mg(2+) as a cofactor.

The protein resides in the cytoplasm. It carries out the reaction Endonucleolytic cleavage at a junction such as a reciprocal single-stranded crossover between two homologous DNA duplexes (Holliday junction).. The RuvA-RuvB-RuvC complex processes Holliday junction (HJ) DNA during genetic recombination and DNA repair. Endonuclease that resolves HJ intermediates. Cleaves cruciform DNA by making single-stranded nicks across the HJ at symmetrical positions within the homologous arms, yielding a 5'-phosphate and a 3'-hydroxyl group; requires a central core of homology in the junction. The consensus cleavage sequence is 5'-(A/T)TT(C/G)-3'. Cleavage occurs on the 3'-side of the TT dinucleotide at the point of strand exchange. HJ branch migration catalyzed by RuvA-RuvB allows RuvC to scan DNA until it finds its consensus sequence, where it cleaves and resolves the cruciform DNA. This Haemophilus influenzae (strain 86-028NP) protein is Crossover junction endodeoxyribonuclease RuvC.